Consider the following 512-residue polypeptide: Cytochrome P450 1A2 (512 aa).

An O-linked (GlcNAc) serine glycan is attached at serine 65. Phenylalanine 222 contacts substrate. Cysteine 454 lines the heme pocket.

The protein belongs to the cytochrome P450 family. As to quaternary structure, interacts with PGRMC1; the interaction requires PGRMC1 homodimerization. The cofactor is heme. Constitutively expressed in liver.

The protein resides in the endoplasmic reticulum membrane. The protein localises to the microsome membrane. The enzyme catalyses an organic molecule + reduced [NADPH--hemoprotein reductase] + O2 = an alcohol + oxidized [NADPH--hemoprotein reductase] + H2O + H(+). It catalyses the reaction 17beta-estradiol + reduced [NADPH--hemoprotein reductase] + O2 = 2-hydroxy-17beta-estradiol + oxidized [NADPH--hemoprotein reductase] + H2O + H(+). It carries out the reaction 17beta-estradiol + reduced [NADPH--hemoprotein reductase] + O2 = 4-hydroxy-17beta-estradiol + oxidized [NADPH--hemoprotein reductase] + H2O + H(+). The catalysed reaction is estrone + reduced [NADPH--hemoprotein reductase] + O2 = 2-hydroxyestrone + oxidized [NADPH--hemoprotein reductase] + H2O + H(+). The enzyme catalyses estrone + reduced [NADPH--hemoprotein reductase] + O2 = 4-hydroxyestrone + oxidized [NADPH--hemoprotein reductase] + H2O + H(+). It catalyses the reaction cholesterol + reduced [NADPH--hemoprotein reductase] + O2 = 25-hydroxycholesterol + oxidized [NADPH--hemoprotein reductase] + H2O + H(+). It carries out the reaction all-trans-retinol + reduced [NADPH--hemoprotein reductase] + O2 = all-trans-retinal + oxidized [NADPH--hemoprotein reductase] + 2 H2O + H(+). The catalysed reaction is all-trans-retinal + reduced [NADPH--hemoprotein reductase] + O2 = all-trans-retinoate + oxidized [NADPH--hemoprotein reductase] + H2O + 2 H(+). The enzyme catalyses (5Z,8Z,11Z,14Z)-eicosatetraenoate + reduced [NADPH--hemoprotein reductase] + O2 = (14R,15S)-epoxy-(5Z,8Z,11Z)-eicosatrienoate + oxidized [NADPH--hemoprotein reductase] + H2O + H(+). It catalyses the reaction (5Z,8Z,11Z,14Z)-eicosatetraenoate + reduced [NADPH--hemoprotein reductase] + O2 = (14S,15R)-epoxy-(5Z,8Z,11Z)-eicosatrienoate + oxidized [NADPH--hemoprotein reductase] + H2O + H(+). It carries out the reaction (5Z,8Z,11Z,14Z,17Z)-eicosapentaenoate + reduced [NADPH--hemoprotein reductase] + O2 = (17R,18S)-epoxy-(5Z,8Z,11Z,14Z)-eicosatetraenoate + oxidized [NADPH--hemoprotein reductase] + H2O + H(+). The catalysed reaction is (4Z,7Z,10Z,13Z,16Z,19Z)-docosahexaenoate + reduced [NADPH--hemoprotein reductase] + O2 = (19R,20S)-epoxy-(4Z,7Z,10Z,13Z,16Z)-docosapentaenoate + oxidized [NADPH--hemoprotein reductase] + H2O + H(+). The enzyme catalyses (5S)-hydroperoxy-(6E,8Z,11Z,14Z)-eicosatetraenoate = 5-oxo-(6E,8Z,11Z,14Z)-eicosatetraenoate + H2O. It catalyses the reaction (12S)-hydroperoxy-(5Z,8Z,10E,14Z)-eicosatetraenoate = 12-oxo-(5Z,8Z,10E,14Z)-eicosatetraenoate + H2O. It carries out the reaction (15S)-hydroperoxy-(5Z,8Z,11Z,13E)-eicosatetraenoate = 15-oxo-(5Z,8Z,11Z,13E)-eicosatetraenoate + H2O. The catalysed reaction is (13S)-hydroperoxy-(9Z,11E)-octadecadienoate = 13-oxo-(9Z,11E)-octadecadienoate + H2O. The enzyme catalyses (5Z,8Z,11Z,14Z)-eicosatetraenoate + reduced [NADPH--hemoprotein reductase] + O2 = 13-hydroxy-(5Z,8Z,11Z,14Z)-eicosatetraenoate + oxidized [NADPH--hemoprotein reductase] + H2O + H(+). It catalyses the reaction (5Z,8Z,11Z,14Z)-eicosatetraenoate + reduced [NADPH--hemoprotein reductase] + O2 = 19-hydroxy-(5Z,8Z,11Z,14Z)-eicosatetraenoate + oxidized [NADPH--hemoprotein reductase] + H2O + H(+). It carries out the reaction (9Z,12Z)-octadecadienoate + reduced [NADPH--hemoprotein reductase] + O2 = 11-hydroxy-(9Z,12Z)-octadecadienoate + oxidized [NADPH--hemoprotein reductase] + H2O + H(+). Its pathway is cofactor metabolism; retinol metabolism. The protein operates within steroid metabolism; cholesterol metabolism. It participates in lipid metabolism; arachidonate metabolism. Functionally, a cytochrome P450 monooxygenase involved in the metabolism of various endogenous substrates, including fatty acids, steroid hormones and vitamins. Mechanistically, uses molecular oxygen inserting one oxygen atom into a substrate, and reducing the second into a water molecule, with two electrons provided by NADPH via cytochrome P450 reductase (NADPH--hemoprotein reductase). Catalyzes the hydroxylation of carbon-hydrogen bonds. Exhibits high catalytic activity for the formation of hydroxyestrogens from estrone (E1) and 17beta-estradiol (E2), namely 2-hydroxy E1 and E2. Metabolizes cholesterol toward 25-hydroxycholesterol, a physiological regulator of cellular cholesterol homeostasis. May act as a major enzyme for all-trans retinoic acid biosynthesis in the liver. Catalyzes two successive oxidative transformation of all-trans retinol to all-trans retinal and then to the active form all-trans retinoic acid. Primarily catalyzes stereoselective epoxidation of the last double bond of polyunsaturated fatty acids (PUFA), displaying a strong preference for the (R,S) stereoisomer. Catalyzes bisallylic hydroxylation and omega-1 hydroxylation of PUFA. May also participate in eicosanoids metabolism by converting hydroperoxide species into oxo metabolites (lipoxygenase-like reaction, NADPH-independent). Plays a role in the oxidative metabolism of xenobiotics. Catalyzes the N-hydroxylation of heterocyclic amines and the O-deethylation of phenacetin. Metabolizes caffeine via N3-demethylation. The protein is Cytochrome P450 1A2 (CYP1A2) of Canis lupus familiaris (Dog).